Reading from the N-terminus, the 61-residue chain is Large ribosomal subunit protein bL32 (61 aa).

The protein belongs to the bacterial ribosomal protein bL32 family.

The polypeptide is Large ribosomal subunit protein bL32 (Hyphomonas neptunium (strain ATCC 15444)).